The primary structure comprises 256 residues: MIDVQSQKDLRGIAIQKVGIKDLNWPIVVMDRANKTQTTIAKITAAAELKGDMRGTHMSRFIEAIDELNVVGPKEIERLLDRIKEKLDSQKAYVRFDFPYFINKRTPVTETLAPLKVDCYFEAEKGEKFDLKVGVIVPVHTLCPCSKEISEYGAHNQRAYVTIEVKMRRFMWIEELVEIAESSASCPLYSILKRPDEKWVTERAYQNPRFVEDLLREVVVKISGDKRIKWYKVFVESIESIHNHNAFAYIEGENTK.

The protein belongs to the GTP cyclohydrolase IV family.

It carries out the reaction GTP + H2O = 7,8-dihydroneopterin 3'-triphosphate + formate + H(+). The protein operates within cofactor biosynthesis; 7,8-dihydroneopterin triphosphate biosynthesis; 7,8-dihydroneopterin triphosphate from GTP: step 1/1. Its function is as follows. Converts GTP to 7,8-dihydroneopterin triphosphate. This is GTP cyclohydrolase FolE2 from Caldicellulosiruptor saccharolyticus (strain ATCC 43494 / DSM 8903 / Tp8T 6331).